The sequence spans 819 residues: Proteome of basal body protein 15 (819 aa).

Low complexity-rich tracts occupy residues Pro46–Arg59 and Arg572–Thr581. Disordered regions lie at residues Pro46 to Gly72 and Glu564 to Val590. A coiled-coil region spans residues Tyr546–His580.

The protein resides in the cytoplasm. Its subcellular location is the cytoskeleton. It localises to the microtubule organizing center. The protein localises to the centrosome. It is found in the centriole. The polypeptide is Proteome of basal body protein 15 (Chlamydomonas reinhardtii (Chlamydomonas smithii)).